We begin with the raw amino-acid sequence, 225 residues long: Octanoyltransferase (225 aa).

Positions 42 to 219 (KNRQASMIFC…SICSALEYIN (178 aa)) constitute a BPL/LPL catalytic domain. Substrate is bound by residues 79 to 86 (RGGKITWH), 149 to 151 (AIG), and 162 to 164 (GFA). Catalysis depends on C180, which acts as the Acyl-thioester intermediate.

This sequence belongs to the LipB family.

The protein resides in the cytoplasm. It catalyses the reaction octanoyl-[ACP] + L-lysyl-[protein] = N(6)-octanoyl-L-lysyl-[protein] + holo-[ACP] + H(+). Its pathway is protein modification; protein lipoylation via endogenous pathway; protein N(6)-(lipoyl)lysine from octanoyl-[acyl-carrier-protein]: step 1/2. Its function is as follows. Catalyzes the transfer of endogenously produced octanoic acid from octanoyl-acyl-carrier-protein onto the lipoyl domains of lipoate-dependent enzymes. Lipoyl-ACP can also act as a substrate although octanoyl-ACP is likely to be the physiological substrate. In Tropheryma whipplei (strain TW08/27) (Whipple's bacillus), this protein is Octanoyltransferase.